The primary structure comprises 183 residues: ATP synthase subunit b, chloroplastic (183 aa).

The helical transmembrane segment at 25–45 (DILATNLINLTVVVGVLIFFG) threads the bilayer.

This sequence belongs to the ATPase B chain family. F-type ATPases have 2 components, F(1) - the catalytic core - and F(0) - the membrane proton channel. F(1) has five subunits: alpha(3), beta(3), gamma(1), delta(1), epsilon(1). F(0) has four main subunits: a(1), b(1), b'(1) and c(10-14). The alpha and beta chains form an alternating ring which encloses part of the gamma chain. F(1) is attached to F(0) by a central stalk formed by the gamma and epsilon chains, while a peripheral stalk is formed by the delta, b and b' chains.

It is found in the plastid. The protein localises to the chloroplast thylakoid membrane. F(1)F(0) ATP synthase produces ATP from ADP in the presence of a proton or sodium gradient. F-type ATPases consist of two structural domains, F(1) containing the extramembraneous catalytic core and F(0) containing the membrane proton channel, linked together by a central stalk and a peripheral stalk. During catalysis, ATP synthesis in the catalytic domain of F(1) is coupled via a rotary mechanism of the central stalk subunits to proton translocation. Its function is as follows. Component of the F(0) channel, it forms part of the peripheral stalk, linking F(1) to F(0). The protein is ATP synthase subunit b, chloroplastic of Sorghum bicolor (Sorghum).